The following is a 269-amino-acid chain: Hydroxyethylthiazole kinase (269 aa).

M42 is a binding site for substrate. Residues R118 and S164 each coordinate ATP. G191 provides a ligand contact to substrate.

It belongs to the Thz kinase family. Requires Mg(2+) as cofactor.

The enzyme catalyses 5-(2-hydroxyethyl)-4-methylthiazole + ATP = 4-methyl-5-(2-phosphooxyethyl)-thiazole + ADP + H(+). It functions in the pathway cofactor biosynthesis; thiamine diphosphate biosynthesis; 4-methyl-5-(2-phosphoethyl)-thiazole from 5-(2-hydroxyethyl)-4-methylthiazole: step 1/1. Functionally, catalyzes the phosphorylation of the hydroxyl group of 4-methyl-5-beta-hydroxyethylthiazole (THZ). The polypeptide is Hydroxyethylthiazole kinase (Listeria monocytogenes serotype 4b (strain F2365)).